A 372-amino-acid chain; its full sequence is Glutamate 5-kinase (372 aa).

Lysine 6 is a binding site for ATP. 3 residues coordinate substrate: serine 46, aspartate 133, and asparagine 145. ATP is bound by residues 165 to 166 (TD) and 207 to 213 (TGGMYTK). The PUA domain occupies 272 to 350 (SGRLFIDEGA…HEIEKILGYK (79 aa)).

This sequence belongs to the glutamate 5-kinase family.

It localises to the cytoplasm. It carries out the reaction L-glutamate + ATP = L-glutamyl 5-phosphate + ADP. Its pathway is amino-acid biosynthesis; L-proline biosynthesis; L-glutamate 5-semialdehyde from L-glutamate: step 1/2. Its function is as follows. Catalyzes the transfer of a phosphate group to glutamate to form L-glutamate 5-phosphate. The chain is Glutamate 5-kinase from Thermoanaerobacter pseudethanolicus (strain ATCC 33223 / 39E) (Clostridium thermohydrosulfuricum).